Here is a 160-residue protein sequence, read N- to C-terminus: Interleukin-36 alpha (160 aa).

The propeptide occupies 1–7 (MNKEKEL). The residue at position 98 (Y98) is a 3'-nitrotyrosine.

The protein belongs to the IL-1 family. In terms of assembly, interacts with TMED10; the interaction mediates the translocation from the cytoplasm into the ERGIC (endoplasmic reticulum-Golgi intermediate compartment) and thereby secretion. Post-translationally, N-terminal truncation leads to a dramatic enhancement of its activity (&gt;1000-fold). Highly expressed in embryonic tissue and in tissues containing epithelial cells. Elevated expression levels are detected in chronic kidney disease; expressed inepithelia from the distal convoluted tubules (DCTs) to the cortical collecting ducts (CCDs) in single nephrons (at protein level).

The protein resides in the cytoplasm. The protein localises to the secreted. In terms of biological role, cytokine that binds to and signals through the IL1RL2/IL-36R receptor which in turn activates NF-kappa-B and MAPK signaling pathways in target cells linked to a pro-inflammatory response. Part of the IL-36 signaling system that is thought to be present in epithelial barriers and to take part in local inflammatory response; similar to the IL-1 system with which it shares the coreceptor IL1RAP. Seems to be involved in skin inflammatory response by acting on keratinocytes, dendritic cells and indirectly on T-cells to drive tissue infiltration, cell maturation and cell proliferation. Induces the production of pro-inflammatory cytokines, including IL-12, Il-1 beta, IL-6, TNF-alpha and IL-23 in bone marrow-derived dendritic cells (BMDCs). Involved in dendritic cell maturation by stimulating the surface expression of CD80, CD86 and MHC class II. Induces the production of IFN-gamma, IL-4 and IL-17 by cultured CD4(+) T-cells and splenocytes. May play a role in pro-inflammatory effects in the lung: induces the expression of CXCL1 and CXCL2 in the lung, and the expression of TNF-alpha, IL-36c, IL-1A, IL-1B, CXCL1 and CXCL2 in isolated splenic CD11c(+) alveolar macrophages. May be involved in T-cell maturation by stimulating the surface expression of CD40 and modestly CD80 and CD86 in splenic CD11c(+) cells. May be involved in CD4(+) T-cell proliferation. Induces NF-kappa B activation in macrophages. The sequence is that of Interleukin-36 alpha from Mus musculus (Mouse).